A 379-amino-acid polypeptide reads, in one-letter code: Multicilin (379 aa).

2 disordered regions span residues 26-46 (SRRS…PWKS) and 87-106 (LLGT…NPSL). The stretch at 175-223 (EQYWKEVADQNQRALGTALIENNQLHVTLTQKQEEIASLRERNVQLKEL) forms a coiled coil. Residues 289–309 (LQNRDPKRPRLQQEPDSKDCS) show a composition bias toward basic and acidic residues. The tract at residues 289–311 (LQNRDPKRPRLQQEPDSKDCSTR) is disordered.

It belongs to the geminin family. As to quaternary structure, heterodimer (via coiled-coil domain) with GMNN (via coiled-coil domain); targets GMNN to the nucleus. Can form homodimers (in vitro, via coiled-coil domain), but these are much less stable than the heterodimer formed with GMNN.

The protein resides in the nucleus. Transcription regulator specifically required for multiciliate cell differentiation. Acts in a multiprotein complex containing E2F4 and E2F5 that binds and activates genes required for centriole biogenesis. Required for the deuterosome-mediated acentriolar pathway. Plays a role in mitotic cell cycle progression by promoting cell cycle exit. Modulates GMNN activity by reducing its affinity for CDT1. The sequence is that of Multicilin (Mcidas) from Rattus norvegicus (Rat).